An 869-amino-acid polypeptide reads, in one-letter code: MAAVDSDVVSLPRGRFRCCLCDVTTANRPSLDAHLKGRKHRDLVQLRATRKAQGLRSVFVSGFPRDVGSAQLSEYFQTFGPVANIVMDKDKGVFAIVEMGDISAREAVLSQPKHSLGGHGLRVRPREQKEFQSPASKSPKGVDSSSHQLVQALAEAADVGAQMVKLVELRELSEAERQLRNLVVALMQEVFTEFFPGCVVHPFGSTVNSFDVHGCDLDLFLDMGDMEETEPDPKAPKVPETSSLDSALASSLDPQALACTPASPLDSLSPTSVQESESLDFDTPSSLAPQTPDSALGSDTVTSPQSLPPVSPLQEDRKEGKQGKELELAEEASKDEKEEAAAVLELVGSILRGCVPGVYRVQTVPSARRPVVKFCHRPSGLHGDVSLSNRLALYNSRFLNLCSEMDGRVRPLVYTLRCWAQHNGLSGGGPLLNNYALTLLVIYFLQTRDPPVLPTVAQLTQRAGEGEQVEVDGWDCSFPKDASRLEPSTNVEPLSSLLAQFFSCVSCLDLSGSLLSLREGRPLMVAEGLPSDLWEGLRLGPMNLQDPFDLSHNVAANVTGRVAKRLQSCCGAAASYCRSLQYQQRSSRGRDWGLLPLLQPSSPSSLLSAKLIPLPSAPFPQVIMALVDVLREALGCHIEQGTKRRRSEGARIKDSPLGGVNKRQRLGGQEKSFEEGKEEPQGCAGDHSENEVEEMVIEVRETPQDWALLHSGPPEEELPLMTANCLDKAAEHNPMKPEVAGEGSQGETGKEASHPSSVSWRCALWHQVWQGRRRARRRLQQQTKEEGRGGPTTGAEWLAMEARVTQELKGPNSEQERPPGEPLLSFVASASQAEQTLTVAPLQDSQGLFPGLHHFLQGFIPQALKNLLK.

The Matrin-type zinc finger occupies 16 to 46 (FRCCLCDVTTANRPSLDAHLKGRKHRDLVQL). The RRM domain occupies 56-128 (RSVFVSGFPR…HGLRVRPREQ (73 aa)). Residues 114–144 (HSLGGHGLRVRPREQKEFQSPASKSPKGVDS) form a disordered region. Ser205 lines the ATP pocket. Mg(2+) is bound by residues Asp216 and Asp218. The UTP site is built by Asp216 and Asp218. 2 disordered regions span residues 226–247 (MEETEPDPKAPKVPETSSLDSA) and 259–335 (CTPA…ASKD). Polar residues-rich tracts occupy residues 266–276 (DSLSPTSVQES) and 283–299 (TPSSLAPQTPDSALGSD). Positions 314–335 (QEDRKEGKQGKELELAEEASKD) are enriched in basic and acidic residues. ATP is bound at residue Asn395. UTP contacts are provided by Asn395, Arg417, Tyr435, and His552. The PAP-associated domain occupies 494 to 552 (LSSLLAQFFSCVSCLDLSGSLLSLREGRPLMVAEGLPSDLWEGLRLGPMNLQDPFDLSH). Residues 601–869 (SSPSSLLSAK…IPQALKNLLK (269 aa)) are KA1; binds the bulging loops of U6 snRNA but is dispensable for terminal uridylyltransferase activity. Disordered stretches follow at residues 640–689 (QGTK…DHSE), 735–757 (MKPEVAGEGSQGETGKEASHPSS), 775–796 (ARRRLQQQTKEEGRGGPTTGAE), and 803–822 (RVTQELKGPNSEQERPPGEP). Residues 671–689 (KSFEEGKEEPQGCAGDHSE) are compositionally biased toward basic and acidic residues. Ser688 and Ser744 each carry phosphoserine.

The protein belongs to the DNA polymerase type-B-like family. In terms of assembly, associates with the cleavage and polyadenylation specificity factor (CPSF) complex. Interacts with CPSF1 and CPSF3; the interaction is direct. Interacts with PIP5K1A. Mg(2+) is required as a cofactor. It depends on Mn(2+) as a cofactor. In terms of processing, phosphorylated by CK1 in the proline-rich (Pro-rich) region.

The protein localises to the nucleus. Its subcellular location is the nucleolus. It is found in the nucleus speckle. The catalysed reaction is RNA(n) + UTP = RNA(n)-3'-uridine ribonucleotide + diphosphate. It carries out the reaction RNA(n) + ATP = RNA(n)-3'-adenine ribonucleotide + diphosphate. With respect to regulation, adenylyltransferase activity is specifically phosphatidylinositol 4,5-bisphosphate (PtdIns(4,5)P2). In terms of biological role, poly(A) polymerase that creates the 3'-poly(A) tail of specific pre-mRNAs. Localizes to nuclear speckles together with PIP5K1A and mediates polyadenylation of a select set of mRNAs, such as HMOX1. In addition to polyadenylation, it is also required for the 3'-end cleavage of pre-mRNAs: binds to the 3'UTR of targeted pre-mRNAs and promotes the recruitment and assembly of the CPSF complex on the 3'UTR of pre-mRNAs. In addition to adenylyltransferase activity, also has uridylyltransferase activity. However, the ATP ratio is higher than UTP in cells, suggesting that it functions primarily as a poly(A) polymerase. Acts as a specific terminal uridylyltransferase for U6 snRNA in vitro: responsible for a controlled elongation reaction that results in the restoration of the four 3'-terminal UMP-residues found in newly transcribed U6 snRNA. Not involved in replication-dependent histone mRNA degradation. This chain is Speckle targeted PIP5K1A-regulated poly(A) polymerase (Tut1), found in Mus musculus (Mouse).